Reading from the N-terminus, the 705-residue chain is Elongation factor G (705 aa).

A tr-type G domain is found at 8-290; that stretch reads HRYRNIGIMA…GVIHLLPSPA (283 aa). GTP-binding positions include 17–24, 88–92, and 142–145; these read AHIDAGKT, DTPGH, and NKMD.

The protein belongs to the TRAFAC class translation factor GTPase superfamily. Classic translation factor GTPase family. EF-G/EF-2 subfamily.

Its subcellular location is the cytoplasm. Catalyzes the GTP-dependent ribosomal translocation step during translation elongation. During this step, the ribosome changes from the pre-translocational (PRE) to the post-translocational (POST) state as the newly formed A-site-bound peptidyl-tRNA and P-site-bound deacylated tRNA move to the P and E sites, respectively. Catalyzes the coordinated movement of the two tRNA molecules, the mRNA and conformational changes in the ribosome. The sequence is that of Elongation factor G from Xylella fastidiosa (strain M12).